We begin with the raw amino-acid sequence, 504 residues long: Hydroxyisobutyraldehyde dehydrogenase (504 aa).

Catalysis depends on Glu260, which acts as the Proton acceptor. Catalysis depends on Cys294, which acts as the Nucleophile.

Belongs to the aldehyde dehydrogenase family.

The protein resides in the cytoplasm. The catalysed reaction is 2-hydroxy-2-methylpropanal + NAD(+) + H2O = 2-hydroxy-2-methylpropanoate + NADH + 2 H(+). Its function is as follows. Involved in the degradation of methyl tert-butyl ether (MTBE). Catalyzes the conversion of hydroxyisobutyraldehyde to hydroxyisobutyric acid (HIBA). The polypeptide is Hydroxyisobutyraldehyde dehydrogenase (Mycolicibacterium austroafricanum (Mycobacterium austroafricanum)).